A 623-amino-acid polypeptide reads, in one-letter code: Glutathione import ATP-binding protein GsiA (623 aa).

ABC transporter domains follow at residues 15-269 (VSGL…QTLL) and 325-564 (LRSG…RKLM). ATP-binding positions include 49-56 (GESGSGKS) and 357-364 (GESGSGKS).

The protein belongs to the ABC transporter superfamily. Glutathione importer (TC 3.A.1.5.11) family. As to quaternary structure, the complex is composed of two ATP-binding proteins (GsiA), two transmembrane proteins (GsiC and GsiD) and a solute-binding protein (GsiB).

Its subcellular location is the cell inner membrane. It carries out the reaction glutathione(out) + ATP + H2O = glutathione(in) + ADP + phosphate + H(+). Functionally, part of the ABC transporter complex GsiABCD involved in glutathione import. Responsible for energy coupling to the transport system. In Salmonella paratyphi A (strain ATCC 9150 / SARB42), this protein is Glutathione import ATP-binding protein GsiA.